We begin with the raw amino-acid sequence, 327 residues long: Phenylalanine--tRNA ligase alpha subunit (327 aa).

Glu252 lines the Mg(2+) pocket.

The protein belongs to the class-II aminoacyl-tRNA synthetase family. Phe-tRNA synthetase alpha subunit type 1 subfamily. Tetramer of two alpha and two beta subunits. Mg(2+) serves as cofactor.

It localises to the cytoplasm. It carries out the reaction tRNA(Phe) + L-phenylalanine + ATP = L-phenylalanyl-tRNA(Phe) + AMP + diphosphate + H(+). The protein is Phenylalanine--tRNA ligase alpha subunit of Shewanella amazonensis (strain ATCC BAA-1098 / SB2B).